A 533-amino-acid polypeptide reads, in one-letter code: Pre-mRNA-splicing factor cwf24 (533 aa).

Residues 1–17 (MEQKNLNINQASGSKIN) are compositionally biased toward polar residues. Residues 1-69 (MEQKNLNINQ…MRDNIPIVSG (69 aa)) are disordered. The segment covering 27–43 (SRRRHRPRQGLKRKKGF) has biased composition (basic residues). A C3H1-type zinc finger spans residues 184 to 212 (DYQPDVCKDYKLTGYCGYGDTCKFLHMRE). The RING-type zinc finger occupies 254 to 292 (CLICKKDYRSPIATTCGHHFCEQCAITRYRKTPTCIQCG). One can recognise an N-acetyltransferase domain in the interval 379–524 (YFIREITESN…SAFYMVCPLS (146 aa)).

The protein belongs to the CWC24 family. Belongs to the 40S cdc5-associated complex (or cwf complex), a spliceosome sub-complex reminiscent of a late-stage spliceosome composed of the U2, U5 and U6 snRNAs and at least brr2, cdc5, cwf2/prp3, cwf3/syf1, cwf4/syf3, cwf5/ecm2, spp42/cwf6, cwf7/spf27, cwf8, cwf9, cwf10, cwf11, cwf12, prp45/cwf13, cwf14, cwf15, cwf16, cwf17, cwf18, cwf19, cwf20, cwf21, cwf22, cwf23, cwf24, cwf25, cwf26, cyp7/cwf27, cwf28, cwf29/ist3, lea1, msl1, prp5/cwf1, prp10, prp12/sap130, prp17, prp22, sap61, sap62, sap114, sap145, slu7, smb1, smd1, smd3, smf1, smg1 and syf2.

The protein localises to the nucleus. Involved in mRNA splicing. The chain is Pre-mRNA-splicing factor cwf24 (cwf24) from Schizosaccharomyces pombe (strain 972 / ATCC 24843) (Fission yeast).